The primary structure comprises 299 residues: ATP phosphoribosyltransferase (299 aa).

This sequence belongs to the ATP phosphoribosyltransferase family. Long subfamily. In terms of assembly, equilibrium between an active dimeric form, an inactive hexameric form and higher aggregates. Interconversion between the various forms is largely reversible and is influenced by the natural substrates and inhibitors of the enzyme. The cofactor is Mg(2+).

Its subcellular location is the cytoplasm. It catalyses the reaction 1-(5-phospho-beta-D-ribosyl)-ATP + diphosphate = 5-phospho-alpha-D-ribose 1-diphosphate + ATP. It participates in amino-acid biosynthesis; L-histidine biosynthesis; L-histidine from 5-phospho-alpha-D-ribose 1-diphosphate: step 1/9. Feedback inhibited by histidine. In terms of biological role, catalyzes the condensation of ATP and 5-phosphoribose 1-diphosphate to form N'-(5'-phosphoribosyl)-ATP (PR-ATP). Has a crucial role in the pathway because the rate of histidine biosynthesis seems to be controlled primarily by regulation of HisG enzymatic activity. The chain is ATP phosphoribosyltransferase from Enterobacter sp. (strain 638).